Here is a 748-residue protein sequence, read N- to C-terminus: Translation factor GUF1 homolog 2, mitochondrial (748 aa).

Residues 1 to 29 (MRVGCCLLLKPLRQRLCTASISSRHIMRW) constitute a mitochondrion transit peptide. Residues 94–276 (SHIRNVAVVA…AIIERVPPPT (183 aa)) enclose the tr-type G domain. GTP contacts are provided by residues 103–110 (AHVDHGKT), 167–171 (DTPGH), and 221–224 (TKMD).

The protein belongs to the TRAFAC class translation factor GTPase superfamily. Classic translation factor GTPase family. LepA subfamily.

It localises to the mitochondrion inner membrane. The enzyme catalyses GTP + H2O = GDP + phosphate + H(+). In terms of biological role, promotes mitochondrial protein synthesis. May act as a fidelity factor of the translation reaction, by catalyzing a one-codon backward translocation of tRNAs on improperly translocated ribosomes. Binds to mitochondrial ribosomes in a GTP-dependent manner. This Trypanosoma cruzi (strain CL Brener) protein is Translation factor GUF1 homolog 2, mitochondrial.